Here is a 192-residue protein sequence, read N- to C-terminus: Molybdenum cofactor cytidylyltransferase (192 aa).

Asp-101 lines the Mg(2+) pocket.

In terms of assembly, monomer. Interacts with the Moco-binding chaperone PaoD. It depends on Mg(2+) as a cofactor. The cofactor is Mn(2+).

The enzyme catalyses Mo-molybdopterin + CTP + H(+) = Mo-molybdopterin cytosine dinucleotide + diphosphate. Functionally, transfers a CMP moiety from CTP to Mo-molybdopterin (Mo-MPT) cofactor (Moco or molybdenum cofactor) to form Mo-molybdopterin cytosine dinucleotide (Mo-MCD) cofactor. Is specific for CTP; other nucleotides such as ATP and GTP cannot be utilized. Is also able to convert MPT to MCD in the absence of molybdate, however, with only one catalytic turnover. The polypeptide is Molybdenum cofactor cytidylyltransferase (mocA) (Escherichia coli (strain K12)).